Here is a 271-residue protein sequence, read N- to C-terminus: Gap junction beta-5 protein (271 aa).

Over 1 to 20 (MNWSVFEGLLSGVNKYSTAF) the chain is Cytoplasmic. A helical membrane pass occupies residues 21-40 (GRIWLSLVFVFRVLVYLVTA). The Extracellular portion of the chain corresponds to 41-75 (ERVWGDDQKDFDCNTRQPGCTNVCYDEFFPVSHVR). Residues 76–98 (LWALQLILVTCPSLLVVMHVAYR) form a helical membrane-spanning segment. The Cytoplasmic portion of the chain corresponds to 99–124 (KAREKKYQQEVGKGYLYPNPGKKRGG). Residues 125-147 (LWWTYVCSLLFKATIDIIFLYLF) form a helical membrane-spanning segment. The Extracellular segment spans residues 148 to 182 (HAFYPRYTLPSMVKCHSAPCPNTVDCFIAKPSEKN). Residues 183-205 (IFIVFMLVTAIVCILLNLVELLY) traverse the membrane as a helical segment. The Cytoplasmic segment spans residues 206–271 (LVIKRCSECA…PRAHVKKTIL (66 aa)). Residues 217-237 (AKRPPTAHAKNDPNWANPSSK) are disordered.

Belongs to the connexin family. Beta-type (group I) subfamily. In terms of assembly, a connexon is composed of a hexamer of connexins. In terms of tissue distribution, expressed in skin.

It is found in the cell membrane. The protein localises to the cell junction. It localises to the gap junction. In terms of biological role, one gap junction consists of a cluster of closely packed pairs of transmembrane channels, the connexons, through which materials of low MW diffuse from one cell to a neighboring cell. The protein is Gap junction beta-5 protein (Gjb5) of Rattus norvegicus (Rat).